We begin with the raw amino-acid sequence, 220 residues long: Putative F-box protein At3g20705 (220 aa).

The F-box domain maps to 1–51; the sequence is MMMMSNLPNDLVEEILSRVTVTFMRTVRSICKKWNALTKDRSFTNKYIRNI.

The sequence is that of Putative F-box protein At3g20705 from Arabidopsis thaliana (Mouse-ear cress).